A 399-amino-acid chain; its full sequence is Forkhead box protein I3 (399 aa).

Disordered stretches follow at residues 87–109 (AGAQ…GSAA), 221–287 (KRRR…ASTL), and 307–353 (SSSS…STVG). Over residues 96–109 (PSASAPASPAGSAA) the composition is skewed to low complexity. Serine 99 and serine 103 each carry phosphoserine. The fork-head DNA-binding region spans 129–223 (RPPYSYSALI…DNGNFRRKRR (95 aa)). Positions 219 to 225 (RRKRRRR) match the Nuclear localization signal motif. Composition is skewed to polar residues over residues 228–248 (ASSN…SSRL) and 258–267 (SPSSILRPSQ). 3 positions are modified to phosphoserine: serine 258, serine 266, and serine 268. Composition is skewed to polar residues over residues 275–287 (TKST…ASTL), 307–317 (SSSSMGNQRTL), and 328–353 (QLPS…STVG). Residues 385–393 (SMVNSLIYP) carry the 9aaTAD motif.

In terms of processing, phosphorylation promotes the transcription factor activity. Dephosphorylation by protein phosphatase 2A (PP2A) reduces its activity. Specifically expressed in the epithelium in developing ectodermal appendages. Expressed in pharyngeal endoderm and ectoderm. Expressed in pre-placodal ectoderm. Down-regulated as the otic placode is induced. Expressed in teeth and hair follicles throughout embryogenesis. Expressed in mammary glands only during the earliest stages of development.

It is found in the nucleus. Functionally, transcription factor required for pharyngeal arch development, which is involved in hair, ear, jaw and dental development. May act as a pioneer transcription factor during pharyngeal arch development. Required for epithelial cell differentiation within the epidermis. Acts at multiple stages of otic placode induction: necessary for preplacodal ectoderm to execute an inner ear program. Required for hair follicle stem cell specification. Acts downstream of TBX1 for the formation of the thymus and parathyroid glands from the third pharyngeal pouch. This is Forkhead box protein I3 from Mus musculus (Mouse).